An 834-amino-acid chain; its full sequence is Periplasmic nitrate reductase (834 aa).

The tat-type signal signal peptide spans M1–A29. In terms of domain architecture, 4Fe-4S Mo/W bis-MGD-type spans L41–D97. C48, C51, C55, and C83 together coordinate [4Fe-4S] cluster. Residues K85, Q152, N177, C181, W214 to M221, S245 to H249, Q264 to D266, M375, Q379, N485, S511 to D512, K534, D561, and T721 to T730 contribute to the Mo-bis(molybdopterin guanine dinucleotide) site. Residue F797 coordinates substrate. The Mo-bis(molybdopterin guanine dinucleotide) site is built by N805 and K822.

It belongs to the prokaryotic molybdopterin-containing oxidoreductase family. NasA/NapA/NarB subfamily. In terms of assembly, component of the periplasmic nitrate reductase NapAB complex composed of NapA and NapB. The cofactor is [4Fe-4S] cluster. Mo-bis(molybdopterin guanine dinucleotide) serves as cofactor. In terms of processing, predicted to be exported by the Tat system. The position of the signal peptide cleavage has not been experimentally proven.

Its subcellular location is the periplasm. The catalysed reaction is 2 Fe(II)-[cytochrome] + nitrate + 2 H(+) = 2 Fe(III)-[cytochrome] + nitrite + H2O. Catalytic subunit of the periplasmic nitrate reductase complex NapAB. Receives electrons from NapB and catalyzes the reduction of nitrate to nitrite. This chain is Periplasmic nitrate reductase, found in Pseudomonas aeruginosa (strain UCBPP-PA14).